A 252-amino-acid polypeptide reads, in one-letter code: 5-oxoprolinase subunit A 1 (252 aa).

The protein belongs to the LamB/PxpA family. As to quaternary structure, forms a complex composed of PxpA, PxpB and PxpC.

It catalyses the reaction 5-oxo-L-proline + ATP + 2 H2O = L-glutamate + ADP + phosphate + H(+). Functionally, catalyzes the cleavage of 5-oxoproline to form L-glutamate coupled to the hydrolysis of ATP to ADP and inorganic phosphate. This is 5-oxoprolinase subunit A 1 from Pseudomonas putida (strain ATCC 47054 / DSM 6125 / CFBP 8728 / NCIMB 11950 / KT2440).